The following is a 288-amino-acid chain: Bifunctional protein FolD (288 aa).

NADP(+) contacts are provided by residues 166–168 (GAS) and Ile-232.

The protein belongs to the tetrahydrofolate dehydrogenase/cyclohydrolase family. As to quaternary structure, homodimer.

The enzyme catalyses (6R)-5,10-methylene-5,6,7,8-tetrahydrofolate + NADP(+) = (6R)-5,10-methenyltetrahydrofolate + NADPH. The catalysed reaction is (6R)-5,10-methenyltetrahydrofolate + H2O = (6R)-10-formyltetrahydrofolate + H(+). It functions in the pathway one-carbon metabolism; tetrahydrofolate interconversion. In terms of biological role, catalyzes the oxidation of 5,10-methylenetetrahydrofolate to 5,10-methenyltetrahydrofolate and then the hydrolysis of 5,10-methenyltetrahydrofolate to 10-formyltetrahydrofolate. This Acidithiobacillus ferrooxidans (strain ATCC 23270 / DSM 14882 / CIP 104768 / NCIMB 8455) (Ferrobacillus ferrooxidans (strain ATCC 23270)) protein is Bifunctional protein FolD.